Consider the following 502-residue polypeptide: Histidine--tRNA ligase (502 aa).

It belongs to the class-II aminoacyl-tRNA synthetase family. As to quaternary structure, homodimer.

The protein localises to the cytoplasm. The enzyme catalyses tRNA(His) + L-histidine + ATP = L-histidyl-tRNA(His) + AMP + diphosphate + H(+). This is Histidine--tRNA ligase from Brucella abortus (strain S19).